The chain runs to 303 residues: Sterol-4-alpha-carboxylate 3-dehydrogenase ERG26, decarboxylating (303 aa).

NADP(+) is bound by residues 8–9 and 30–32; these read SL and TAS. Ser71 is a substrate binding site. The interval 77 to 96 is disordered; that stretch reads PTQEPTSEENAHRYDENNAP. Residues Tyr102, Lys106, and 128–131 each bind NADP(+); that span reads IPGI. Tyr102 provides a ligand contact to substrate. Residue Lys106 is the Proton donor of the active site.

This sequence belongs to the 3-beta-HSD family. In terms of assembly, heterotetramer of ERG25, ERG26, ERG27 and ERG28. ERG28 acts as a scaffold to tether ERG27 and other 4,4-demethylation-related enzymes, forming a demethylation enzyme complex, in the endoplasmic reticulum.

The protein localises to the endoplasmic reticulum membrane. Its pathway is steroid metabolism; ergosterol biosynthesis. Functionally, sterol-4-alpha-carboxylate 3-dehydrogenase; part of the third module of ergosterol biosynthesis pathway that includes the late steps of the pathway. ERG26 is a catalytic component of the C-4 demethylation complex that catalyzes the conversion of 4,4-dimethylfecosterol into fecosterol via 4-methylfecosterol. The third module or late pathway involves the ergosterol synthesis itself through consecutive reactions that mainly occur in the endoplasmic reticulum (ER) membrane. Firstly, the squalene synthase ERG9 catalyzes the condensation of 2 farnesyl pyrophosphate moieties to form squalene, which is the precursor of all steroids. Squalene synthase is crucial for balancing the incorporation of farnesyl diphosphate (FPP) into sterol and nonsterol isoprene synthesis. Secondly, squalene is converted into lanosterol by the consecutive action of the squalene epoxidase ERG1 and the lanosterol synthase ERG7. Then, the delta(24)-sterol C-methyltransferase ERG6 methylates lanosterol at C-24 to produce eburicol. Eburicol is the substrate of the sterol 14-alpha demethylase encoded by CYP51A, CYP51B and CYP51C, to yield 4,4,24-trimethyl ergosta-8,14,24(28)-trienol. CYP51B encodes the enzyme primarily responsible for sterol 14-alpha-demethylation, and plays an essential role in ascospore formation. CYP51A encodes an additional sterol 14-alpha-demethylase, induced on ergosterol depletion and responsible for the intrinsic variation in azole sensitivity. The third CYP51 isoform, CYP51C, does not encode a sterol 14-alpha-demethylase, but is required for full virulence on host wheat ears. The C-14 reductase ERG24 then reduces the C14=C15 double bond which leads to 4,4-dimethylfecosterol. A sequence of further demethylations at C-4, involving the C-4 demethylation complex containing the C-4 methylsterol oxidases ERG25, the sterol-4-alpha-carboxylate 3-dehydrogenase ERG26 and the 3-keto-steroid reductase ERG27, leads to the production of fecosterol via 4-methylfecosterol. ERG28 has a role as a scaffold to help anchor ERG25, ERG26 and ERG27 to the endoplasmic reticulum. The C-8 sterol isomerase ERG2 then catalyzes the reaction which results in unsaturation at C-7 in the B ring of sterols and thus converts fecosterol to episterol. The sterol-C5-desaturases ERG3A and ERG3BB then catalyze the introduction of a C-5 double bond in the B ring to produce 5-dehydroepisterol. The C-22 sterol desaturases ERG5A and ERG5B further convert 5-dehydroepisterol into ergosta-5,7,22,24(28)-tetraen-3beta-ol by forming the C-22(23) double bond in the sterol side chain. Finally, ergosta-5,7,22,24(28)-tetraen-3beta-ol is substrate of the C-24(28) sterol reductase ERG4 to produce ergosterol. The polypeptide is Sterol-4-alpha-carboxylate 3-dehydrogenase ERG26, decarboxylating (Gibberella zeae (strain ATCC MYA-4620 / CBS 123657 / FGSC 9075 / NRRL 31084 / PH-1) (Wheat head blight fungus)).